The chain runs to 242 residues: B-box zinc finger protein 20 (242 aa).

8 residues coordinate Zn(2+): Cys-5, Cys-8, Cys-28, His-33, Cys-58, Cys-61, Cys-81, and His-91. The B box-type 1; atypical zinc-finger motif lies at 5–47; sequence CAVCDKEEASVFCCADEAALCNGCDRHVHFANKLAGKHLRFSL. A B box-type 2; atypical zinc finger spans residues 58–100; it reads CDICGERRALLFCQEDRAILCRECDIPIHQANEHTKKHNRFLL. The interval 112–153 is disordered; sequence YPRASNSNSAAAFGRAKTRPKSVSSEVPSSASNEVFTSSSST. Residues 133–153 are compositionally biased toward low complexity; sequence SVSSEVPSSASNEVFTSSSST.

In terms of assembly, interacts with MED25 and COP1. Post-translationally, COP1-mediated ubiquitination and subsequent proteasomal degradation of BBX20 occurs in the dark.

It is found in the nucleus. Its function is as follows. Acts as a positive regulator of seedling photomorphogenesis. Plays a negative role in brassinosteroid responses. This is B-box zinc finger protein 20 from Arabidopsis thaliana (Mouse-ear cress).